We begin with the raw amino-acid sequence, 201 residues long: MSPDLLGALLVAAGYLAGSIPFGVVLGRLVLGVDVRTVGSGNIGATNVARAGGKKMGVLVLVLDAAKAIVPILVARRVLAGTPHAEVWVTAVAVAAFVGHLFPVWLGFKGGKGVATGLGIFAVLAPWAALAGLVGYAVAYGLTRISSVGSLTGTTLCAAGGFATYGPRHPISWAGLAIALLIFLRHRENIRRLVRGEEKKV.

The next 5 helical transmembrane spans lie at 5–25 (LLGA…FGVV), 55–75 (KMGV…ILVA), 88–108 (WVTA…WLGF), 118–138 (LGIF…GYAV), and 164–184 (TYGP…LIFL).

This sequence belongs to the PlsY family. As to quaternary structure, probably interacts with PlsX.

Its subcellular location is the cell inner membrane. It catalyses the reaction an acyl phosphate + sn-glycerol 3-phosphate = a 1-acyl-sn-glycero-3-phosphate + phosphate. The protein operates within lipid metabolism; phospholipid metabolism. Catalyzes the transfer of an acyl group from acyl-phosphate (acyl-PO(4)) to glycerol-3-phosphate (G3P) to form lysophosphatidic acid (LPA). This enzyme utilizes acyl-phosphate as fatty acyl donor, but not acyl-CoA or acyl-ACP. The chain is Glycerol-3-phosphate acyltransferase from Anaeromyxobacter sp. (strain K).